Here is a 259-residue protein sequence, read N- to C-terminus: Trypsin (259 aa).

An N-terminal signal peptide occupies residues 1-32 (MKHFLRALKRCSVAVATVAIAVVGLQPVTASA). Residues 33-36 (APNP) constitute a propeptide, activation peptide. In terms of domain architecture, Peptidase S1 spans 37-257 (VVGGTRAAQG…FASAIASAAR (221 aa)). Residues cysteine 58 and cysteine 74 are joined by a disulfide bond. Residues histidine 73 and aspartate 118 each act as charge relay system in the active site. Disulfide bonds link cysteine 177–cysteine 192 and cysteine 204–cysteine 233. The Charge relay system role is filled by serine 208.

The protein belongs to the peptidase S1 family.

It carries out the reaction Preferential cleavage: Arg-|-Xaa, Lys-|-Xaa.. The chain is Trypsin (sprT) from Streptomyces griseus.